Here is a 664-residue protein sequence, read N- to C-terminus: MSEHKKSSKIIGIDLGTTNSCVSVMEGGQAKVITSSEGTRTTPSIVAFKGSETLVGIPAKRQAVTNPEKTLASTKRFIGRKYSEVESEIKTVPYKVTSGSNGDAVFQVEGKQYTPEEIGAHILMKMKETAEAYLGETITEAVITVPAYFNDSQRASTKDAGRIAGLDVKRIIPEPTAAALAYGIDKAGDKKIAVFDLGGGTFDISILEIGDGVFEVLSTNGDTHLGGDDFDEVIIKWMIEEFQKQEGIDLGKDNMALQRLKDAAEKAKIELSGMSSTEINQPFITMDANGPKHLTLTLTRAHFEKLASNLIERTKAPCIKALADAKLSASDIDDVLLVGGMSRMPAVQEIVKDIFGKEPNKGVNPDEVVAIGAAIQGGVLGGEVKDVLLLDVIPLSLGIETLGGVMTPLVERNTTIPTQKKQIFSTAADNQPAVTIVVLQGERPMAKDNKEIGRFDLTDIPPAPRGHPQIEVTFDIDANGILHVSAKDAASGREQKIRIEASSGLKEDEIQRMIRDAEQNKEEDKKRREASDVRNEADSMIFRAEKAINDYKANIPESLVKEIEERVEKVRSALKEDASTEKIKEASEELSRHMQKIGEAMQSQSASAAPSSAANAQGGPNINTEDLKKHSFSTKPPAGNSTSASSNNENIEEADVEIVDKPND.

At threonine 201 the chain carries Phosphothreonine; by autocatalysis. The span at leucine 574–arginine 592 shows a compositional bias: basic and acidic residues. Residues leucine 574–aspartate 664 are disordered. Over residues alanine 600–glutamine 617 the composition is skewed to low complexity. Polar residues predominate over residues glycine 639–glutamate 649.

It belongs to the heat shock protein 70 family.

Functionally, acts as a chaperone. In Chlamydia felis (strain Fe/C-56) (Chlamydophila felis), this protein is Chaperone protein DnaK.